The following is a 113-amino-acid chain: Hydrogenase maturation factor HypA (113 aa).

H2 is a Ni(2+) binding site. Zn(2+) is bound by residues C73, C76, C89, and C92.

This sequence belongs to the HypA/HybF family.

Involved in the maturation of [NiFe] hydrogenases. Required for nickel insertion into the metal center of the hydrogenase. The protein is Hydrogenase maturation factor HypA of Legionella pneumophila (strain Paris).